The primary structure comprises 718 residues: Protein Smaug homolog 1 (718 aa).

Phosphoserine is present on serine 168. The interval 278 to 310 is disordered; that stretch reads ARGPQCLPSDHAPLSPQSSVASSGSGGSEHLED. In terms of domain architecture, SAM spans 323-396; sequence SGMKDVPAWL…LKSLERDIIE (74 aa). Disordered stretches follow at residues 417 to 474 and 572 to 601; these read AYGS…LQPH and NRGF…QYQI. At serine 420 the chain carries Phosphoserine. Threonine 424 is subject to Phosphothreonine. Over residues 453 to 466 the composition is skewed to low complexity; the sequence is GATATGATATPSAG. Arginine 573 carries the omega-N-methylarginine modification. Serine 580 is modified (phosphoserine).

Belongs to the SMAUG family.

Its subcellular location is the cytoplasm. The protein localises to the cell projection. It is found in the dendrite. It localises to the synapse. The protein resides in the synaptosome. In terms of biological role, acts as a translational repressor of SRE-containing messengers. The chain is Protein Smaug homolog 1 (SAMD4A) from Macaca fascicularis (Crab-eating macaque).